The sequence spans 66 residues: Cold shock-like protein CspLA (66 aa).

One can recognise a CSD domain in the interval 4 to 63 (GTVKWFNAEKGFGFIERENGDDVFVHFSAIQGDGFKSLDEGQAVTFDVEEGQRGPQAANV).

Homodimer.

The protein resides in the cytoplasm. In Listeria innocua serovar 6a (strain ATCC BAA-680 / CLIP 11262), this protein is Cold shock-like protein CspLA (cspLA).